The sequence spans 102 residues: Urease subunit beta (102 aa).

Belongs to the urease beta subunit family. In terms of assembly, heterotrimer of UreA (gamma), UreB (beta) and UreC (alpha) subunits. Three heterotrimers associate to form the active enzyme.

The protein resides in the cytoplasm. It carries out the reaction urea + 2 H2O + H(+) = hydrogencarbonate + 2 NH4(+). The protein operates within nitrogen metabolism; urea degradation; CO(2) and NH(3) from urea (urease route): step 1/1. In Methylobacillus flagellatus (strain ATCC 51484 / DSM 6875 / VKM B-1610 / KT), this protein is Urease subunit beta.